A 228-amino-acid chain; its full sequence is UPF0173 metal-dependent hydrolase LMHCC_0991 (228 aa).

It belongs to the UPF0173 family.

This is UPF0173 metal-dependent hydrolase LMHCC_0991 from Listeria monocytogenes serotype 4a (strain HCC23).